A 105-amino-acid polypeptide reads, in one-letter code: Thioredoxin (105 aa).

The region spanning M1–I105 is the Thioredoxin domain. C30 and C33 are disulfide-bonded.

It belongs to the thioredoxin family.

Functionally, component of the thioredoxin-thioredoxin reductase system. Participates in various redox reactions through the reversible oxidation of its active center dithiol to a disulfide and catalyzes dithiol-disulfide exchange reactions. This Rickettsia felis (strain ATCC VR-1525 / URRWXCal2) (Rickettsia azadi) protein is Thioredoxin (trxA).